A 147-amino-acid chain; its full sequence is Ribonuclease VapC43 (147 aa).

A PINc domain is found at 3 to 139; sequence CVDVNVLVYA…ARFRRLRWRH (137 aa). The Mg(2+) site is built by Asp-5 and Asp-108.

It belongs to the PINc/VapC protein family. The cofactor is Mg(2+).

In terms of biological role, toxic component of a type II toxin-antitoxin (TA) system. An RNase. Its toxic effect is neutralized by coexpression with cognate antitoxin VapB43. The sequence is that of Ribonuclease VapC43 from Mycobacterium tuberculosis (strain CDC 1551 / Oshkosh).